The following is a 116-amino-acid chain: Host transcription reprogramming factor 4 (116 aa).

An N-terminal signal peptide occupies residues 1-24; sequence MHIIHISKFMALLAISTIAIPTRG. The tract at residues 24-53 is disordered; it reads GRSEVDSRDVNQAQTVTSGSSIAPSGSEKR. Over residues 33-47 the composition is skewed to polar residues; that stretch reads VNQAQTVTSGSSIAP. The segment at 74 to 96 adopts a C2H2-type; degenerate zinc-finger fold; the sequence is FQCPHCKDGISNRVALYTHVKAF.

The protein localises to the secreted. It is found in the host nucleus. Probable secreted effector that translocates into the nuclei of host cells to reprogram the expression of targeted genes by binding on effector binding elements in rice. This Pyricularia oryzae (strain 70-15 / ATCC MYA-4617 / FGSC 8958) (Rice blast fungus) protein is Host transcription reprogramming factor 4.